A 193-amino-acid polypeptide reads, in one-letter code: dTTP/UTP pyrophosphatase (193 aa).

The active-site Proton acceptor is the Asp-75.

The protein belongs to the Maf family. YhdE subfamily. It depends on a divalent metal cation as a cofactor.

It localises to the cytoplasm. It catalyses the reaction dTTP + H2O = dTMP + diphosphate + H(+). The enzyme catalyses UTP + H2O = UMP + diphosphate + H(+). In terms of biological role, nucleoside triphosphate pyrophosphatase that hydrolyzes dTTP and UTP. May have a dual role in cell division arrest and in preventing the incorporation of modified nucleotides into cellular nucleic acids. The chain is dTTP/UTP pyrophosphatase from Chlorobium phaeovibrioides (strain DSM 265 / 1930) (Prosthecochloris vibrioformis (strain DSM 265)).